Here is an 814-residue protein sequence, read N- to C-terminus: Protein kinase C-binding protein NELL2 (814 aa).

An N-terminal signal peptide occupies residues 1 to 19 (MEFILGIFCVIFCLRAGAG). Asparagine 51, asparagine 223, and asparagine 296 each carry an N-linked (GlcNAc...) asparagine glycan. A Laminin G-like domain is found at 53–226 (SKAFLFQDTS…SQCPDLNRTC (174 aa)). The region spanning 270–329 (RSCTVKGNIYRELESWMDGCKKCTCTNGTAQCETLTCSVPNCLSGFAPAYVPGKCCKECQ) is the VWFC 1 domain. Positions 395–437 (GHDFCSEGHNCVEYSICKNLNDKAVCICRDGFRALREDSAYCE) constitute an EGF-like 1 domain. 3 disulfides stabilise this stretch: cysteine 399/cysteine 411, cysteine 405/cysteine 420, and cysteine 422/cysteine 436. Residues aspartate 438, isoleucine 439, and glutamate 441 each contribute to the Ca(2+) site. The EGF-like 2; calcium-binding domain maps to 438-479 (DIDECTEGRHYCRENTVCVNTPGSFMCVCQTGYLKIDDYSCT). Disulfide bonds link cysteine 442-cysteine 455, cysteine 449-cysteine 464, cysteine 466-cysteine 478, cysteine 484-cysteine 497, cysteine 491-cysteine 506, cysteine 508-cysteine 519, cysteine 523-cysteine 533, cysteine 527-cysteine 539, and cysteine 541-cysteine 550. Ca(2+) is bound by residues asparagine 457, threonine 458, and serine 461. Residues 480–520 (EHNECATNQHSCDENAVCYNTVGGHNCVCQPGYTGNGTVCK) form the EGF-like 3; calcium-binding domain. Residue asparagine 515 is glycosylated (N-linked (GlcNAc...) asparagine). The EGF-like 4 domain maps to 521–551 (AFCTDGCRNGGTCIAPNICACPQGFTGPSCE). Residues aspartate 553, isoleucine 554, and glutamate 556 each coordinate Ca(2+). One can recognise an EGF-like 5; calcium-binding domain in the interval 553 to 599 (DIDECTEGFVQCDSRANCINLPGWYHCECRDGYHDNGMFSLSGESCE). Cystine bridges form between cysteine 557-cysteine 570, cysteine 564-cysteine 579, and cysteine 581-cysteine 598. The Ca(2+) site is built by asparagine 572, leucine 573, and tryptophan 576. Ca(2+) contacts are provided by aspartate 600, isoleucine 601, and glutamate 603. In terms of domain architecture, EGF-like 6; calcium-binding spans 600-635 (DIDECATGRHSCSNDTVCFNLDGGFDCRCPHGKNCS). Intrachain disulfides connect cysteine 604–cysteine 617, cysteine 611–cysteine 626, and cysteine 628–cysteine 634. Residue asparagine 613 is glycosylated (N-linked (GlcNAc...) asparagine). Ca(2+)-binding residues include asparagine 619, leucine 620, and glycine 623. An N-linked (GlcNAc...) asparagine glycan is attached at asparagine 633. VWFC domains follow at residues 636–691 (GDCT…PECD) and 696–754 (SQCL…PRCI).

Homotrimer.

It is found in the secreted. Functionally, may regulate neuronal differentiation, polarization and axon guidance. In Xenopus tropicalis (Western clawed frog), this protein is Protein kinase C-binding protein NELL2 (nell2).